Reading from the N-terminus, the 396-residue chain is Cysteine desulfurase (396 aa).

Residues 71-72 (GT), Asn-148, Gln-176, and 196-198 (SGH) contribute to the pyridoxal 5'-phosphate site. At Lys-199 the chain carries N6-(pyridoxal phosphate)lysine. Pyridoxal 5'-phosphate is bound at residue Thr-231. The active-site Cysteine persulfide intermediate is the Cys-319. Cys-319 serves as a coordination point for [2Fe-2S] cluster.

The protein belongs to the class-V pyridoxal-phosphate-dependent aminotransferase family. NifS/IscS subfamily. Homodimer. Requires pyridoxal 5'-phosphate as cofactor.

It carries out the reaction (sulfur carrier)-H + L-cysteine = (sulfur carrier)-SH + L-alanine. Functionally, catalyzes the removal of elemental sulfur atoms from cysteine to produce alanine. Seems to participate in the biosynthesis of the nitrogenase metalloclusters by providing the inorganic sulfur required for the Fe-S core formation. The chain is Cysteine desulfurase from Azotobacter chroococcum mcd 1.